A 246-amino-acid chain; its full sequence is Protein phosphatase PhpP (246 aa).

The PPM-type phosphatase domain occupies 2-240 (EISLLTDVGQ…DNITVALVSM (239 aa)). Residues Asp-36, Gly-37, Asp-192, and Asp-231 each contribute to the Mn(2+) site.

The protein belongs to the PP2C family. It depends on Mn(2+) as a cofactor.

It is found in the cytoplasm. It catalyses the reaction O-phospho-L-seryl-[protein] + H2O = L-seryl-[protein] + phosphate. The catalysed reaction is O-phospho-L-threonyl-[protein] + H2O = L-threonyl-[protein] + phosphate. Functionally, protein phosphatase able to dephosphorylate StkP-P and other phosphorylated protein substrates. PhpP and its cognate protein kinase StkP appear to constitute a functional signaling couple in vivo, PhpP's primary role being probably to control phosphorylation levels of StkP and of its targets. PhpP thus performs an essential control of StkP activity. Also dephosphorylates DivIVA in vivo. The polypeptide is Protein phosphatase PhpP (phpP) (Streptococcus pneumoniae serotype 2 (strain D39 / NCTC 7466)).